The sequence spans 159 residues: UPF0303 protein Ping_1243 (159 aa).

The protein belongs to the UPF0303 family.

The sequence is that of UPF0303 protein Ping_1243 from Psychromonas ingrahamii (strain DSM 17664 / CCUG 51855 / 37).